We begin with the raw amino-acid sequence, 157 residues long: Glutaredoxin-2, mitochondrial (157 aa).

A mitochondrion-targeting transit peptide spans Met1–Ser18. At Ser20 the chain carries Phosphoserine. Residues Val51–Asn151 enclose the Glutaredoxin domain. Residue Cys62 coordinates [2Fe-2S] cluster. Position 68 (Lys68) interacts with glutathione. An S-glutathionyl cysteine; alternate modification is found at Cys71. Cys71 and Cys74 form a disulfide bridge. The glutathione site is built by Gln103 and Val115. Position 147 (Cys147) interacts with [2Fe-2S] cluster.

It belongs to the glutaredoxin family. Monomer; active form. Homodimer; inactive form. The homodimer is probably linked by 1 2Fe-2S cluster.

The protein resides in the mitochondrion. Its activity is regulated as follows. The 2Fe-2S present in the homodimer leads to inactivation of the enzyme. The 2Fe-2S may serve as a redox sensor: the presence of one-electron oxidants or reductants leading to the loss of the 2Fe-2S cluster, subsequent monomerization and activation of the enzyme. Its function is as follows. Glutathione-dependent oxidoreductase that facilitates the maintenance of mitochondrial redox homeostasis upon induction of apoptosis by oxidative stress. Involved in response to hydrogen peroxide and regulation of apoptosis caused by oxidative stress. Acts as a very efficient catalyst of monothiol reactions because of its high affinity for protein glutathione-mixed disulfides. Can receive electrons not only from glutathione (GSH), but also from thioredoxin reductase supporting both monothiol and dithiol reactions. Efficiently catalyzes both glutathionylation and deglutathionylation of mitochondrial complex I, which in turn regulates the superoxide production by the complex. Overexpression decreases the susceptibility to apoptosis and prevents loss of cardiolipin and cytochrome c release. This Bos taurus (Bovine) protein is Glutaredoxin-2, mitochondrial (GLRX2).